The primary structure comprises 363 residues: Ferrochelatase (363 aa).

Positions 209 and 290 each coordinate Fe cation.

This sequence belongs to the ferrochelatase family.

It localises to the cytoplasm. The enzyme catalyses heme b + 2 H(+) = protoporphyrin IX + Fe(2+). Its pathway is porphyrin-containing compound metabolism; protoheme biosynthesis; protoheme from protoporphyrin-IX: step 1/1. In terms of biological role, catalyzes the ferrous insertion into protoporphyrin IX. The chain is Ferrochelatase from Methylibium petroleiphilum (strain ATCC BAA-1232 / LMG 22953 / PM1).